A 417-amino-acid polypeptide reads, in one-letter code: Serine/threonine-protein kinase PkaB (417 aa).

One can recognise a Protein kinase domain in the interval 9-270; it reads YTAHQILGRG…ELSARLRELL (262 aa). ATP contacts are provided by residues 15 to 23 and lysine 36; that span reads LGRGSAGTV. Aspartate 130 (proton acceptor) is an active-site residue. 2 disordered regions span residues 279 to 371 and 395 to 417; these read LDVD…RAAT and LATG…PAAP. Positions 280-293 are enriched in acidic residues; it reads DVDEPDAEQPEDAP. Composition is skewed to low complexity over residues 294–308 and 349–368; these read DASA…STAE and GTAR…ARNR. Positions 408-417 are enriched in polar residues; it reads DTRNSAPAAP.

This sequence belongs to the protein kinase superfamily. Ser/Thr protein kinase family. Autophosphorylated mainly at Thr.

The enzyme catalyses L-seryl-[protein] + ATP = O-phospho-L-seryl-[protein] + ADP + H(+). It catalyses the reaction L-threonyl-[protein] + ATP = O-phospho-L-threonyl-[protein] + ADP + H(+). This Streptomyces coelicolor (strain ATCC BAA-471 / A3(2) / M145) protein is Serine/threonine-protein kinase PkaB (pkaB).